Here is a 322-residue protein sequence, read N- to C-terminus: HPr kinase/phosphorylase (322 aa).

Residues histidine 146 and lysine 167 contribute to the active site. An ATP-binding site is contributed by 161–168 (GDSGLGKS). Serine 168 is a binding site for Mg(2+). Aspartate 185 acts as the Proton acceptor; for phosphorylation activity. Proton donor; for dephosphorylation activity in catalysis. Residues 209-218 (LEVRGLGLLD) are important for the catalytic mechanism of both phosphorylation and dephosphorylation. Glutamate 210 provides a ligand contact to Mg(2+). Arginine 250 is an active-site residue. An important for the catalytic mechanism of dephosphorylation region spans residues 271–276 (QVAAGR).

The protein belongs to the HPrK/P family. Homohexamer. It depends on Mg(2+) as a cofactor.

It catalyses the reaction [HPr protein]-L-serine + ATP = [HPr protein]-O-phospho-L-serine + ADP + H(+). The enzyme catalyses [HPr protein]-O-phospho-L-serine + phosphate + H(+) = [HPr protein]-L-serine + diphosphate. Functionally, catalyzes the ATP- as well as the pyrophosphate-dependent phosphorylation of a specific serine residue in HPr, a phosphocarrier protein of the phosphoenolpyruvate-dependent sugar phosphotransferase system (PTS). HprK/P also catalyzes the pyrophosphate-producing, inorganic phosphate-dependent dephosphorylation (phosphorolysis) of seryl-phosphorylated HPr (P-Ser-HPr). This is HPr kinase/phosphorylase from Paraburkholderia xenovorans (strain LB400).